We begin with the raw amino-acid sequence, 238 residues long: tRNA (guanine-N(1)-)-methyltransferase (238 aa).

S-adenosyl-L-methionine-binding positions include Gly-109 and 129 to 134; that span reads IGDFVL.

The protein belongs to the RNA methyltransferase TrmD family. In terms of assembly, homodimer.

The protein resides in the cytoplasm. The enzyme catalyses guanosine(37) in tRNA + S-adenosyl-L-methionine = N(1)-methylguanosine(37) in tRNA + S-adenosyl-L-homocysteine + H(+). Its function is as follows. Specifically methylates guanosine-37 in various tRNAs. The protein is tRNA (guanine-N(1)-)-methyltransferase of Exiguobacterium sp. (strain ATCC BAA-1283 / AT1b).